The sequence spans 772 residues: Carnitine O-palmitoyltransferase 1, muscle isoform (772 aa).

At 1–47 (MAEAHQAVAFQFTVTPDGVDFRLSREALRHIYLSGINSWKKRLIRIK) the chain is on the cytoplasmic side. A helical transmembrane segment spans residues 48 to 73 (NGILRGVYPGSPTSWLVVVMATVGSN). The Mitochondrial intermembrane portion of the chain corresponds to 74-102 (YCKVDISMGLVHCIQRCLPTRYGSYGTPQ). The chain crosses the membrane as a helical span at residues 103–122 (TETLLSMVIFSTGVWATGIF). Residues 123-772 (LFRQTLKLLL…DLFKISKTDS (650 aa)) are Cytoplasmic-facing. His473 functions as the Proton acceptor in the catalytic mechanism. 555–567 (GKGLIKKCRTSPD) contacts CoA. Residues Tyr589 and Thr602 each coordinate (R)-carnitine.

The protein belongs to the carnitine/choline acetyltransferase family. As to expression, high expression in heart, skeletal muscle and brown adipose tissue. Also expressed in white adipose tissue, but not in liver.

It localises to the mitochondrion outer membrane. It catalyses the reaction (R)-carnitine + hexadecanoyl-CoA = O-hexadecanoyl-(R)-carnitine + CoA. Its pathway is lipid metabolism; fatty acid beta-oxidation. Catalyzes the transfer of the acyl group of long-chain fatty acid-CoA conjugates onto carnitine, an essential step for the mitochondrial uptake of long-chain fatty acids and their subsequent beta-oxidation in the mitochondrion. The sequence is that of Carnitine O-palmitoyltransferase 1, muscle isoform (Cpt1b) from Rattus norvegicus (Rat).